The following is a 694-amino-acid chain: Elongation factor G 2 (694 aa).

Residues 5-280 (SKYRNIGIFA…AVVDYLPSPT (276 aa)) enclose the tr-type G domain. Residues 14-21 (AHVDAGKT), 78-82 (DTPGH), and 132-135 (NKLD) each bind GTP.

It belongs to the TRAFAC class translation factor GTPase superfamily. Classic translation factor GTPase family. EF-G/EF-2 subfamily.

The protein localises to the cytoplasm. Functionally, catalyzes the GTP-dependent ribosomal translocation step during translation elongation. During this step, the ribosome changes from the pre-translocational (PRE) to the post-translocational (POST) state as the newly formed A-site-bound peptidyl-tRNA and P-site-bound deacylated tRNA move to the P and E sites, respectively. Catalyzes the coordinated movement of the two tRNA molecules, the mRNA and conformational changes in the ribosome. The polypeptide is Elongation factor G 2 (Pseudoalteromonas translucida (strain TAC 125)).